A 526-amino-acid chain; its full sequence is Ubiquitin carboxyl-terminal hydrolase 17-like protein A (526 aa).

The tract at residues 1-21 (MVVALSFPEADPALSSPDAPE) is disordered. Residues 51 to 348 (CGLQNTGNSC…NAYVLFYVQQ (298 aa)) enclose the USP domain. Residue Cys-60 is the Nucleophile of the active site. Residue His-307 is the Proton acceptor of the active site. Residues 374 to 385 (KKSRRKKHKKKS) show a composition bias toward basic residues. 2 disordered regions span residues 374 to 394 (KKSRRKKHKKKSPFTEDLGEP) and 465 to 494 (RSTANWGRDSPDKENQPLHNADRLLTSQGP). Positions 473-486 (DSPDKENQPLHNAD) are enriched in basic and acidic residues.

It belongs to the peptidase C19 family. Post-translationally, polyubiquitinated; ubiquitination leads to its subsequent degradation. In terms of tissue distribution, expressed in hematopoietic progenitor cell lines Ba/F3 and FDCP1. Not detected in brain, lung, liver, kidney, thymus, spleen and bone marrow.

It catalyses the reaction Thiol-dependent hydrolysis of ester, thioester, amide, peptide and isopeptide bonds formed by the C-terminal Gly of ubiquitin (a 76-residue protein attached to proteins as an intracellular targeting signal).. Deubiquitinating enzyme that removes conjugated ubiquitin from specific proteins to regulate different cellular processes. Has deubiquitinating enzyme activity for DNAH5, suggesting a role in the regulation of DNAH5 degradation by the ubiquitin-proteasome pathway. Has growth-suppressing activity; induces arrest in G1 phase upon controlled expression. This Mus musculus (Mouse) protein is Ubiquitin carboxyl-terminal hydrolase 17-like protein A (Usp17la).